The sequence spans 114 residues: Probable 4-amino-4-deoxy-L-arabinose-phosphoundecaprenol flippase subunit ArnE (114 aa).

Transmembrane regions (helical) follow at residues Pro-41–Leu-61, Leu-64–Ser-84, and Tyr-94–Leu-114. In terms of domain architecture, EamA spans Leu-43 to Gly-112.

Belongs to the ArnE family. Heterodimer of ArnE and ArnF.

It localises to the cell inner membrane. The protein operates within bacterial outer membrane biogenesis; lipopolysaccharide biosynthesis. Its function is as follows. Translocates 4-amino-4-deoxy-L-arabinose-phosphoundecaprenol (alpha-L-Ara4N-phosphoundecaprenol) from the cytoplasmic to the periplasmic side of the inner membrane. The sequence is that of Probable 4-amino-4-deoxy-L-arabinose-phosphoundecaprenol flippase subunit ArnE from Aeromonas hydrophila subsp. hydrophila (strain ATCC 7966 / DSM 30187 / BCRC 13018 / CCUG 14551 / JCM 1027 / KCTC 2358 / NCIMB 9240 / NCTC 8049).